The chain runs to 458 residues: Repulsive guidance molecule A (458 aa).

A signal peptide spans 1 to 53 (MGGPGPRRAGTSRERLVVTGRAGWMGMGRGAGRSALGFWPTLAFLLCSFPAAT). Positions 54-176 (SPCKILKCNS…NYTHCGLFGD (123 aa)) are cleaved as a propeptide — removed in mature form. The segment covering 121-133 (HNCSKDGPTSQPR) has biased composition (polar residues). The interval 121-149 (HNCSKDGPTSQPRLHTLPPAGDSQERSDS) is disordered. N-linked (GlcNAc...) asparagine glycans are attached at residues Asn122 and Asn167. 2 disulfide bridges follow: Cys153–Cys234 and Cys171–Cys323. A glycan (N-linked (GlcNAc...) asparagine) is linked at Asn397. A lipid anchor (GPI-anchor amidated alanine) is attached at Ala433. Residues 434–458 (AGLPLAPQPLLGALILLLALFPVFC) constitute a propeptide, removed in mature form.

It belongs to the repulsive guidance molecule (RGM) family. In terms of assembly, interacts with NEO1, BMP2 and BMP4. In terms of processing, autocatalytically cleaved at low pH; the two chains remain linked via two disulfide bonds.

Its subcellular location is the cell membrane. Functionally, member of the repulsive guidance molecule (RGM) family that performs several functions in the developing and adult nervous system. Regulates cephalic neural tube closure, inhibits neurite outgrowth and cortical neuron branching, and the formation of mature synapses. Binding to its receptor NEO1/neogenin induces activation of RHOA-ROCK1/Rho-kinase signaling pathway through UNC5B-ARHGEF12/LARG-PTK2/FAK1 cascade, leading to collapse of the neuronal growth cone and neurite outgrowth inhibition. Furthermore, RGMA binding to NEO1/neogenin leads to HRAS inactivation by influencing HRAS-PTK2/FAK1-AKT1 pathway. It also functions as a bone morphogenetic protein (BMP) coreceptor that may signal through SMAD1, SMAD5, and SMAD8. This chain is Repulsive guidance molecule A (RGMA), found in Macaca fascicularis (Crab-eating macaque).